Here is a 305-residue protein sequence, read N- to C-terminus: Methionyl-tRNA formyltransferase (305 aa).

108 to 111 (SLLP) provides a ligand contact to (6S)-5,6,7,8-tetrahydrofolate.

Belongs to the Fmt family.

It carries out the reaction L-methionyl-tRNA(fMet) + (6R)-10-formyltetrahydrofolate = N-formyl-L-methionyl-tRNA(fMet) + (6S)-5,6,7,8-tetrahydrofolate + H(+). Functionally, attaches a formyl group to the free amino group of methionyl-tRNA(fMet). The formyl group appears to play a dual role in the initiator identity of N-formylmethionyl-tRNA by promoting its recognition by IF2 and preventing the misappropriation of this tRNA by the elongation apparatus. This chain is Methionyl-tRNA formyltransferase, found in Thermus thermophilus (strain ATCC BAA-163 / DSM 7039 / HB27).